A 479-amino-acid polypeptide reads, in one-letter code: Poly(A) polymerase catalytic subunit (479 aa).

Catalysis depends on residues Asp-202 and Asp-204. Residues Asp-202, Asp-204, and Asp-253 each coordinate Ca(2+).

It belongs to the poxviridae poly(A) polymerase catalytic subunit family. Heterodimer of a large (catalytic) subunit and a small (regulatory) subunit.

It carries out the reaction RNA(n) + ATP = RNA(n)-3'-adenine ribonucleotide + diphosphate. Polymerase that creates the 3'-poly(A) tail of mRNA's. This chain is Poly(A) polymerase catalytic subunit (OPG063), found in Camelus.